The following is a 99-amino-acid chain: EPIDERMAL PATTERNING FACTOR-like protein 8 (99 aa).

A signal peptide spans 1–35 (MDSSRKYKRCGFGAALFVANIFFSLLSLHCISGAH). Disulfide bonds link C53–C90, C57–C63, and C60–C92.

The protein belongs to the plant cysteine rich small secretory peptide family. Epidermal patterning factor subfamily.

Its subcellular location is the secreted. Its function is as follows. Controls stomatal patterning. This Arabidopsis thaliana (Mouse-ear cress) protein is EPIDERMAL PATTERNING FACTOR-like protein 8.